The primary structure comprises 567 residues: DNA ligase (567 aa).

Glu246 provides a ligand contact to ATP. Lys248 functions as the N6-AMP-lysine intermediate in the catalytic mechanism. Arg253, Arg268, Glu298, Phe339, Arg415, and Lys421 together coordinate ATP.

This sequence belongs to the ATP-dependent DNA ligase family. It depends on Mg(2+) as a cofactor.

It catalyses the reaction ATP + (deoxyribonucleotide)n-3'-hydroxyl + 5'-phospho-(deoxyribonucleotide)m = (deoxyribonucleotide)n+m + AMP + diphosphate.. Its function is as follows. DNA ligase that seals nicks in double-stranded DNA during DNA replication, DNA recombination and DNA repair. The sequence is that of DNA ligase from Nanoarchaeum equitans (strain Kin4-M).